A 404-amino-acid polypeptide reads, in one-letter code: Trigger factor (404 aa).

In terms of domain architecture, PPIase FKBP-type spans 160–225; that stretch reads KDHLFVRTEE…VLEVKTLKLP (66 aa).

It belongs to the FKBP-type PPIase family. Tig subfamily.

It localises to the cytoplasm. The enzyme catalyses [protein]-peptidylproline (omega=180) = [protein]-peptidylproline (omega=0). Involved in protein export. Acts as a chaperone by maintaining the newly synthesized protein in an open conformation. Functions as a peptidyl-prolyl cis-trans isomerase. This Thermus thermophilus (strain ATCC BAA-163 / DSM 7039 / HB27) protein is Trigger factor.